The sequence spans 389 residues: Leucine aminopeptidase 1 (389 aa).

An N-terminal signal peptide occupies residues 1–18 (MKSSVLLSLCTAALVAGA). Residues 19–89 (AHPLEPQVVL…INANRLIEKS (71 aa)) constitute a propeptide that is removed on maturation. N-linked (GlcNAc...) asparagine glycans are attached at residues Asn-99, Asn-156, and Asn-180. Residues His-188, Asp-207, Glu-246, and Asp-273 each contribute to the Zn(2+) site. Cys-322 and Cys-326 are joined by a disulfide. His-355 serves as a coordination point for Zn(2+).

Belongs to the peptidase M28 family. M28E subfamily. Monomer. Zn(2+) serves as cofactor.

The protein localises to the secreted. Its function is as follows. Extracellular aminopeptidase that allows assimilation of proteinaceous substrates. In Phaeosphaeria nodorum (strain SN15 / ATCC MYA-4574 / FGSC 10173) (Glume blotch fungus), this protein is Leucine aminopeptidase 1 (LAP1).